Consider the following 377-residue polypeptide: Cyclin-I (377 aa).

The segment at 356 to 377 (TDLSRQEGHASPCPPLQPVSVM) is disordered. Over residues 367-377 (PCPPLQPVSVM) the composition is skewed to pro residues.

It belongs to the cyclin family.

The protein is Cyclin-I (Ccni) of Mus musculus (Mouse).